The following is a 709-amino-acid chain: Leucine-rich repeat and calponin homology domain-containing protein 1 (709 aa).

Residues 24–37 (LHQHHQHHQHHQHH) show a composition bias toward basic residues. Positions 24 to 49 (LHQHHQHHQHHQHHGGTGGTGFNLPL) are disordered. LRR repeat units follow at residues 60 to 83 (AANS…TAPG), 86 to 108 (LSDT…ELCQ), 109 to 131 (FVSL…AIVN), 132 to 155 (LQML…LCGL), 157 to 176 (LKVL…EIGQ), 177 to 199 (LKQL…QIGQ), 200 to 223 (LKSL…LVDL), 225 to 244 (LVKF…CFRE), and 245 to 268 (MKQL…ICTK). Basic and acidic residues-rich tracts occupy residues 301–312 (HQHVEDSKKDSD) and 381–390 (QEREQLAGRA). The tract at residues 301 to 390 (HQHVEDSKKD…QEREQLAGRA (90 aa)) is disordered. 3 positions are modified to phosphoserine: Ser395, Ser518, and Ser522. The interval 504-526 (SNGSQYSPNEIRENSPSVSPTAN) is disordered. Phosphothreonine is present on Thr581. The 114-residue stretch at 589–702 (MREEKELVEQ…TTVQALLDVT (114 aa)) folds into the Calponin-homology (CH) domain.

Interacts (via LRR repeats) with unphosphorylated DOCK8 (via DHR-2 domain); the interaction prevents the association between DOCK8 and CDC42.

The protein resides in the cytoplasm. Acts as a negative regulator of GTPase CDC42 by sequestering CDC42-guanine exchange factor DOCK8. Probably by preventing CDC42 activation, negatively regulates CD4(+) T-cell migration in response to chemokine stimulation. The sequence is that of Leucine-rich repeat and calponin homology domain-containing protein 1 (Lrch1) from Mus musculus (Mouse).